We begin with the raw amino-acid sequence, 414 residues long: Glutamyl-tRNA reductase (414 aa).

Substrate-binding positions include 48 to 51 (TCNR), Ser104, 109 to 111 (EAQ), and Gln115. The active-site Nucleophile is Cys49. Position 184-189 (184-189 (GAGEMI)) interacts with NADP(+).

The protein belongs to the glutamyl-tRNA reductase family. Homodimer.

The enzyme catalyses (S)-4-amino-5-oxopentanoate + tRNA(Glu) + NADP(+) = L-glutamyl-tRNA(Glu) + NADPH + H(+). It participates in porphyrin-containing compound metabolism; protoporphyrin-IX biosynthesis; 5-aminolevulinate from L-glutamyl-tRNA(Glu): step 1/2. In terms of biological role, catalyzes the NADPH-dependent reduction of glutamyl-tRNA(Glu) to glutamate 1-semialdehyde (GSA). This Methylobacillus flagellatus (strain ATCC 51484 / DSM 6875 / VKM B-1610 / KT) protein is Glutamyl-tRNA reductase.